A 534-amino-acid polypeptide reads, in one-letter code: Glucose-6-phosphate isomerase (534 aa).

Glutamate 356 acts as the Proton donor in catalysis. Residues histidine 387 and lysine 502 contribute to the active site.

This sequence belongs to the GPI family.

Its subcellular location is the cytoplasm. The enzyme catalyses alpha-D-glucose 6-phosphate = beta-D-fructose 6-phosphate. The protein operates within carbohydrate biosynthesis; gluconeogenesis. It participates in carbohydrate degradation; glycolysis; D-glyceraldehyde 3-phosphate and glycerone phosphate from D-glucose: step 2/4. In terms of biological role, catalyzes the reversible isomerization of glucose-6-phosphate to fructose-6-phosphate. This chain is Glucose-6-phosphate isomerase, found in Desulfotalea psychrophila (strain LSv54 / DSM 12343).